Reading from the N-terminus, the 419-residue chain is Prolyl hydroxylase EGLN2 (419 aa).

Low complexity-rich tracts occupy residues 1–18 (MDSP…PQLP) and 64–73 (TTATATTTTA). Disordered stretches follow at residues 1–89 (MDSP…GELW) and 108–181 (AAQG…REEV). Positions 89–134 (WPLQSEGAAALVTKECQRLAAQGARPEAPKRKWAKDGGDAPSPSKR) match the Bipartite nuclear localization signal motif. The segment covering 115-126 (EAPKRKWAKDGG) has biased composition (basic and acidic residues). The residue at position 130 (serine 130) is a Phosphoserine. Low complexity predominate over residues 154 to 174 (SGASNSSSSSSNTTSSSGEAS). Residues 237 to 247 (VSQRAIPPRSI) form a beta(2)beta(3) 'finger-like' loop region. Residues 290-388 (GRTKAMVACY…RYAITVWYFD (99 aa)) form the Fe2OG dioxygenase domain. Fe cation contacts are provided by histidine 309, aspartate 311, and histidine 370. Arginine 379 is a binding site for 2-oxoglutarate.

In terms of assembly, interacts with E3 ligase SIAH2. Interacts with LIMD1, WTIP and AJUBA. The cofactor is Fe(2+). L-ascorbate is required as a cofactor. Post-translationally, ubiquitinated by SIAH1 and/or SIAH2 in response to the unfolded protein response (UPR), leading to its degradation. As to expression, highly expressed in testis, expression was also detected in the heart brain, liver kidney and lung. Expression was lowest in spleen and skeletal muscle. Constitutively expressed during differentiation of C2C12 skeletal myocytes.

It localises to the nucleus. It catalyses the reaction L-prolyl-[protein] + 2-oxoglutarate + O2 = trans-4-hydroxy-L-prolyl-[protein] + succinate + CO2. The enzyme catalyses L-prolyl-[hypoxia-inducible factor alpha subunit] + 2-oxoglutarate + O2 = trans-4-hydroxy-L-prolyl-[hypoxia-inducible factor alpha subunit] + succinate + CO2. Its function is as follows. Prolyl hydroxylase that mediates hydroxylation of proline residues in target proteins, such as ATF4, IKBKB, CEP192 and HIF1A. Target proteins are preferentially recognized via a LXXLAP motif. Cellular oxygen sensor that catalyzes, under normoxic conditions, the post-translational formation of 4-hydroxyproline in hypoxia-inducible factor (HIF) alpha proteins. Hydroxylates a specific proline found in each of the oxygen-dependent degradation (ODD) domains (N-terminal, NODD, and C-terminal, CODD) of HIF1A. Also hydroxylates HIF2A. Has a preference for the CODD site for both HIF1A and HIF2A. Hydroxylated HIFs are then targeted for proteasomal degradation via the von Hippel-Lindau ubiquitination complex. Under hypoxic conditions, the hydroxylation reaction is attenuated allowing HIFs to escape degradation resulting in their translocation to the nucleus, heterodimerization with HIF1B, and increased expression of hypoxy-inducible genes. EGLN2 is involved in regulating hypoxia tolerance and apoptosis in cardiac and skeletal muscle. Also regulates susceptibility to normoxic oxidative neuronal death. Links oxygen sensing to cell cycle and primary cilia formation by hydroxylating the critical centrosome component CEP192 which promotes its ubiquitination and subsequent proteasomal degradation. Hydroxylates IKBKB, mediating NF-kappa-B activation in hypoxic conditions. Also mediates hydroxylation of ATF4, leading to decreased protein stability of ATF4. This chain is Prolyl hydroxylase EGLN2, found in Mus musculus (Mouse).